The primary structure comprises 166 residues: Phospholipase A2 inhibitor clone 10 (166 aa).

A signal peptide spans Met1–Gly19. The 116-residue stretch at Leu46–Glu161 folds into the C-type lectin domain. 2 disulfides stabilise this stretch: Cys83–Cys160 and Cys138–Cys152. Residue Asn122 is glycosylated (N-linked (GlcNAc...) asparagine).

It belongs to the alpha-type phospholipase A2 inhibitor family. Homotrimer; non-covalently linked. In terms of tissue distribution, expressed by the liver.

The protein localises to the secreted. This phospholipase A2 inhibitor binds directly phospholipase A2 in the presence or absence of calcium. This Bothrops moojeni (Lance-headed viper) protein is Phospholipase A2 inhibitor clone 10.